Here is a 1305-residue protein sequence, read N- to C-terminus: Nonribosomal peptide synthetase hkm11 (1305 aa).

Residues T278 to K672 are adenylation. Residues A788–N864 enclose the Carrier domain. S825 bears the O-(pantetheine 4'-phosphoryl)serine mark. Residues K926–V1166 are condensation.

This sequence belongs to the NRP synthetase family.

It catalyses the reaction hancockiamide D + (E)-cinnamate + ATP = hancockiamide A + AMP + diphosphate. The enzyme catalyses hancockiamide H + (E)-cinnamate + ATP = hancockiamide G + AMP + diphosphate. The protein operates within secondary metabolite biosynthesis. Nonribosomal peptide synthetase; part of the gene cluster that mediates the biosynthesis of hancockiamides, an unusual new family of N-cinnamoylated piperazines. The NRPS hkm10 and the NmrA-like reductase hkm9 are proposed to convert two molecules of L-Phe to the intermediary piperazine called xenocockiamide A. Xenocockiamide A is then converted to hancockiamide D via a series of hydroxylations and O-methylations. The tyrosinase hkm6 may catalyze an aromatic hydroxylation, then the 2-oxoglutarate-dependent Fe(II) dioxygenase hkm4 and the FAD-dependent phenol hydroxylase hkm7 may catalyze consecutive hydroxylations to install 2 more hydroxy groups, and the methyltransferase hkm8 probably catalyzes two methylations using 2 molecules of S-adenosyl-L-methionine (SAM). The NRPS hkm11 activates and transfers trans-cinnamate supplied by the PAL hkm12 to hancockiamide D and produces hancockiamide A. NRPS Hkm11 has the flexibility to tolerate the bulky hancockiamide G as a substrate and the absence of the acetyl-transferase hkm3 opens up the opportunity for hkm11 to introduce a second N-cinnamoyl moiety. The cytochrome P450 monooxygenase hkm5 catalyzes the methylenedioxy bridge formation, converting hancockiamide A into hancockiamide G. Hkm5 can also convert hancockiamide B into hancockiamide C, and hancockiamide D into hancockiamide H. The N-acetyltransferase hkm3 finally transfers an acetyl group to 1-N of piperazine, converting hancockiamide A into hancockiamide B and hancockiamide G into hancockiamide C. The chain is Nonribosomal peptide synthetase hkm11 from Aspergillus hancockii.